The chain runs to 237 residues: Beta-glucanase (237 aa).

An N-terminal signal peptide occupies residues 1 to 23; it reads MKKKSCFTLVTTFAFSLIFSVSA. A GH16 domain is found at 28–237; sequence VFWEPLSYFN…EYDWVKYTSN (210 aa). Residues Cys55 and Cys84 are joined by a disulfide bond. Glu128 acts as the Nucleophile in catalysis. The Proton donor role is filled by Glu132.

The protein belongs to the glycosyl hydrolase 16 family.

It carries out the reaction Hydrolysis of (1-&gt;4)-beta-D-glucosidic linkages in beta-D-glucans containing (1-&gt;3)- and (1-&gt;4)-bonds.. The polypeptide is Beta-glucanase (Paenibacillus macerans (Bacillus macerans)).